Consider the following 377-residue polypeptide: 4-hydroxy-3-methylbut-2-en-1-yl diphosphate synthase (flavodoxin) (377 aa).

[4Fe-4S] cluster is bound by residues cysteine 270, cysteine 273, cysteine 305, and glutamate 312.

This sequence belongs to the IspG family. It depends on [4Fe-4S] cluster as a cofactor.

It carries out the reaction (2E)-4-hydroxy-3-methylbut-2-enyl diphosphate + oxidized [flavodoxin] + H2O + 2 H(+) = 2-C-methyl-D-erythritol 2,4-cyclic diphosphate + reduced [flavodoxin]. It participates in isoprenoid biosynthesis; isopentenyl diphosphate biosynthesis via DXP pathway; isopentenyl diphosphate from 1-deoxy-D-xylulose 5-phosphate: step 5/6. Functionally, converts 2C-methyl-D-erythritol 2,4-cyclodiphosphate (ME-2,4cPP) into 1-hydroxy-2-methyl-2-(E)-butenyl 4-diphosphate. The sequence is that of 4-hydroxy-3-methylbut-2-en-1-yl diphosphate synthase (flavodoxin) from Bacillus subtilis (strain 168).